A 114-amino-acid polypeptide reads, in one-letter code: NADH dehydrogenase [ubiquinone] 1 subunit C2, isoform 2 (114 aa).

Residues 56-75 (GLHRQLLYITAFFFAGYYLV) form a helical membrane-spanning segment.

This sequence belongs to the complex I NDUFC2 subunit family. In terms of assembly, complex I is composed of 45 different subunits.

It localises to the mitochondrion inner membrane. Its function is as follows. Accessory subunit of the mitochondrial membrane respiratory chain NADH dehydrogenase (Complex I), that is believed not to be involved in catalysis. Complex I functions in the transfer of electrons from NADH to the respiratory chain. The immediate electron acceptor for the enzyme is believed to be ubiquinone. In Homo sapiens (Human), this protein is NADH dehydrogenase [ubiquinone] 1 subunit C2, isoform 2 (NDUFC2-KCTD14).